The sequence spans 715 residues: Eosinophil peroxidase (715 aa).

The N-terminal stretch at 1-17 (MHLLPALAGVLATLVLA) is a signal peptide. The propeptide occupies 18-139 (QPCEGTDPAS…SGCALRDQAE (122 aa)). Residues asparagine 52 and asparagine 113 are each glycosylated (N-linked (GlcNAc...) asparagine). An intrachain disulfide couples cysteine 141 to cysteine 152. Position 232 (aspartate 232) interacts with heme b. The active-site Proton acceptor is histidine 233. Residue aspartate 234 coordinates Ca(2+). 2 disulfide bridges follow: cysteine 253–cysteine 263 and cysteine 257–cysteine 281. Residues threonine 306, phenylalanine 308, aspartate 310, and serine 312 each contribute to the Ca(2+) site. N-linked (GlcNAc...) asparagine glycosylation is found at asparagine 327 and asparagine 363. Cysteine 359 and cysteine 370 are oxidised to a cystine. The heme b site is built by glutamate 380 and histidine 474. Tyrosine 488 is subject to 3'-nitrotyrosine. 2 cysteine pairs are disulfide-bonded: cysteine 578–cysteine 635 and cysteine 676–cysteine 701. 2 N-linked (GlcNAc...) asparagine glycosylation sites follow: asparagine 700 and asparagine 708.

This sequence belongs to the peroxidase family. XPO subfamily. In terms of assembly, tetramer of two light chains and two heavy chains. The cofactor is Ca(2+). Heme b is required as a cofactor.

Its subcellular location is the cytoplasmic granule. The enzyme catalyses 2 a phenolic donor + H2O2 = 2 a phenolic radical donor + 2 H2O. Functionally, mediates tyrosine nitration of secondary granule proteins in mature resting eosinophils. Shows significant inhibitory activity towards Mycobacterium tuberculosis H37Rv by inducing bacterial fragmentation and lysis. The polypeptide is Eosinophil peroxidase (EPX) (Homo sapiens (Human)).